We begin with the raw amino-acid sequence, 291 residues long: UPF0276 protein VV1_0952 (291 aa).

The protein belongs to the UPF0276 family.

This is UPF0276 protein VV1_0952 from Vibrio vulnificus (strain CMCP6).